Consider the following 894-residue polypeptide: Alpha-actinin-2 (894 aa).

The actin-binding stretch occupies residues 1 to 254 (MNQIEPGVQY…IMTYVSCFYH (254 aa)). Calponin-homology (CH) domains are found at residues 38 to 142 (KQQR…LRFA) and 151 to 257 (TSAK…HAFA). At Thr-237 the chain carries Phosphothreonine. Spectrin repeat units lie at residues 281 to 391 (RLME…WLLN), 401 to 506 (HLAE…ALER), 516 to 627 (QLHL…SLQE), and 637 to 740 (RLRR…EVET). EF-hand domains follow at residues 753–788 (EQMN…MGYD) and 789–824 (LGEA…ETAD). The Ca(2+) site is built by Asp-766, Asn-770, Asp-777, Asp-802, Asn-804, and Thr-808.

Belongs to the alpha-actinin family. As to quaternary structure, homodimer; antiparallel. Also forms heterodimers with ACTN3. Interacts with ADAM12, MYOZ1, MYOZ2 and MYOZ3. Interacts via its C-terminal region with the LDB3 PDZ domain. Interacts with XIRP2. Interacts with DST isoform 1 (via N-terminus). Interacts with PARVB. Interacts with SYNPO2. Ubiquitinated by FBXL22, leading to proteasomal degradation. As to expression, expressed in both skeletal and cardiac muscle.

The protein localises to the cytoplasm. It localises to the myofibril. The protein resides in the sarcomere. It is found in the z line. F-actin cross-linking protein which is thought to anchor actin to a variety of intracellular structures. This is a bundling protein. This is Alpha-actinin-2 (ACTN2) from Homo sapiens (Human).